The sequence spans 300 residues: Iron/alpha-ketoglutarate-dependent dioxygenase okaE (300 aa).

Fe cation contacts are provided by H134, D136, and H210.

This sequence belongs to the PhyH family. In terms of assembly, homodimer. It depends on Fe cation as a cofactor.

The catalysed reaction is okaramine A + 2-oxoglutarate + AH2 + O2 = 12-deshydroxyl okaramine E + succinate + A + CO2 + H2O. It carries out the reaction 12-deshydroxyl okaramine E + 2-oxoglutarate + O2 = okaramine E + succinate + CO2. It catalyses the reaction okaramine A + 2-oxoglutarate + O2 = okaramine E + succinate + CO2. The protein operates within alkaloid biosynthesis. It participates in secondary metabolite biosynthesis; terpenoid biosynthesis. Its function is as follows. Iron/alpha-ketoglutarate-dependent dioxygenase; part of the gene cluster that mediates the biosynthesis of okaramine B, a prenylated indole alkaloid that possesses an unusual octacyclic ring system, including a four-membered azetidine ring and an eight-membered azocine ring, and that exhibits insecticidal activity against silkworm larvae. Within the pathway, okaE forms the unusual 2-dimethyl-3-methyl-azetidine ring to yield 12-deshydroxyl okaramine E from okaramine A. OkaE also catalyzes the hydroxylation of 12-deshydroxyl okaramine E to produce okaramine E. The biosynthesis begins with the NRPS okaA that condenses two tryptophan molecules into cyclo(L-Trp-L-Trp). Prenylation by the prenyltransferase okaC then leads to the formation of cyclo(N8-(alpha,alpha-dimethylallyl)-L-Trp-6a-(alpha,alpha-dime-thylallyl)-L-Trp). This is followed by indole 2,3-epoxidation by the FAD-dependent monooxygenase okaB to facilitate the formation of the hexahydropyrrolo[2,3-b]indole (HPI) moiety of okaramine C. The cytochrome P450 monooxygenase okaD then likely catalyzes formation of the eight-membered ring of okaramine A. The dioxygenase okaE further forms the unusual 2-dimethyl-3-methyl-azetidine ring to yield 12-deshydroxyl okaramine E, as well as the hydroxylation of 12-deshydroxyl okaramine E to produce okaramine E. The cytochrome P450 monoxygenase okaG converts 12-deshydroxyl okaramine E into 3-desmethyl okaramine B which is further methylated by the methyltransferase okaF into okaramine B. In a shunt pathway, okaG and okaF together are also able to convert okaramine E into okaramine D. Okaramine H is produced by nonenzymatic conversion from okaramine A. The protein is Iron/alpha-ketoglutarate-dependent dioxygenase okaE of Penicillium ochrochloron.